The chain runs to 30 residues: Cyclotide hyen-C (30 aa).

The segment at residues 1-30 (GTHPCQETCVTSTRCSTQGCHCNWPICFKN) is a cross-link (cyclopeptide (Gly-Asn)). Disulfide bonds link cysteine 5–cysteine 20, cysteine 9–cysteine 22, and cysteine 15–cysteine 27.

In terms of processing, this is a cyclic peptide. In terms of tissue distribution, detected in stems (at protein level).

Functionally, probably participates in a plant defense mechanism. Does not display any cytotoxic activity towards K562, HeLa, MCF-7, HUVEC or red blood cells. Does not bind to phospholipd membranes containing 1-palmitoyl 2-oleoyl phosphatidylcholine (POPC) or 1-palmitoyl-2-oleophosphatidylethanolamine (POPE). This is Cyclotide hyen-C from Pigea enneasperma (Spade flower).